The sequence spans 426 residues: Mannose-1-phosphate guanyltransferase alpha-B (426 aa).

Belongs to the transferase hexapeptide repeat family.

It catalyses the reaction alpha-D-mannose 1-phosphate + GTP + H(+) = GDP-alpha-D-mannose + diphosphate. Its pathway is nucleotide-sugar biosynthesis; GDP-alpha-D-mannose biosynthesis; GDP-alpha-D-mannose from alpha-D-mannose 1-phosphate (GTP route): step 1/1. This is Mannose-1-phosphate guanyltransferase alpha-B (gmppa-b) from Xenopus laevis (African clawed frog).